Consider the following 559-residue polypeptide: Proton-coupled zinc antiporter SLC30A9, mitochondrial (559 aa).

A disordered region spans residues 58 to 96; sequence SSDQKEDGGSKGTSAASSPEKSMAGLDPSKPEQKSTFPP. 5 consecutive transmembrane segments (helical) span residues 230-250, 305-325, 333-353, 389-409, and 415-435; these read VVIV…LAWV, GVGI…IGLL, LLWA…TLLV, AAAV…SLTG, and SLGS…LIYT. An LXXLL motif motif is present at residues 453–457; sequence LTELL.

Belongs to the cation diffusion facilitator (CDF) transporter (TC 2.A.4) family. SLC30A subfamily.

It localises to the mitochondrion membrane. The protein resides in the nucleus. The protein localises to the endoplasmic reticulum. It catalyses the reaction Zn(2+)(in) + 2 H(+)(out) = Zn(2+)(out) + 2 H(+)(in). Mitochondrial proton-coupled zinc ion antiporter mediating the export of zinc from the mitochondria and involved in zinc homeostasis, zinc mobilization as well as mitochondrial morphology and health. In nucleus, may function as a secondary coactivator for nuclear receptors. This is Proton-coupled zinc antiporter SLC30A9, mitochondrial (slc30a9) from Xenopus laevis (African clawed frog).